The primary structure comprises 317 residues: Small ribosomal subunit protein RACK1 (317 aa).

WD repeat units follow at residues 13-44 (GHSG…IMWK), 61-91 (GHSH…RLWD), 103-133 (GHTK…KLWN), 146-178 (GHTE…KVWN), 190-220 (GHTG…MLWD), 231-260 (DSGD…KIWD), and 281-311 (AEPP…RVWQ).

This sequence belongs to the WD repeat G protein beta family. Ribosomal protein RACK1 subfamily.

Its subcellular location is the cytoplasm. Involved in the recruitment, assembly and/or regulation of a variety of signaling molecules. Interacts with a wide variety of proteins and plays a role in many cellular processes. Required for VANGL2 membrane localization, inhibits Wnt signaling and regulates cellular polarization and oriented cell division during gastrulation. In Oreochromis niloticus (Nile tilapia), this protein is Small ribosomal subunit protein RACK1 (gnb2l1).